The primary structure comprises 143 residues: Large ribosomal subunit protein uL11 (143 aa).

Belongs to the universal ribosomal protein uL11 family. In terms of assembly, part of the ribosomal stalk of the 50S ribosomal subunit. Interacts with L10 and the large rRNA to form the base of the stalk. L10 forms an elongated spine to which L12 dimers bind in a sequential fashion forming a multimeric L10(L12)X complex. One or more lysine residues are methylated.

Its function is as follows. Forms part of the ribosomal stalk which helps the ribosome interact with GTP-bound translation factors. This chain is Large ribosomal subunit protein uL11, found in Sphingopyxis alaskensis (strain DSM 13593 / LMG 18877 / RB2256) (Sphingomonas alaskensis).